A 303-amino-acid chain; its full sequence is Ferrochelatase (303 aa).

Residues His-185 and Glu-262 each contribute to the Fe cation site.

This sequence belongs to the ferrochelatase family.

Its subcellular location is the cytoplasm. It carries out the reaction heme b + 2 H(+) = protoporphyrin IX + Fe(2+). Its pathway is porphyrin-containing compound metabolism; protoheme biosynthesis; protoheme from protoporphyrin-IX: step 1/1. In terms of biological role, catalyzes the ferrous insertion into protoporphyrin IX. The protein is Ferrochelatase of Campylobacter jejuni subsp. doylei (strain ATCC BAA-1458 / RM4099 / 269.97).